A 181-amino-acid chain; its full sequence is Probable nicotinate-nucleotide adenylyltransferase (181 aa).

The protein belongs to the NadD family.

It catalyses the reaction nicotinate beta-D-ribonucleotide + ATP + H(+) = deamido-NAD(+) + diphosphate. The protein operates within cofactor biosynthesis; NAD(+) biosynthesis; deamido-NAD(+) from nicotinate D-ribonucleotide: step 1/1. Its function is as follows. Catalyzes the reversible adenylation of nicotinate mononucleotide (NaMN) to nicotinic acid adenine dinucleotide (NaAD). The chain is Probable nicotinate-nucleotide adenylyltransferase from Campylobacter jejuni subsp. jejuni serotype O:23/36 (strain 81-176).